The sequence spans 317 residues: MYKNYLQRTLVLLLCFILYFFTFPLGGKAYSLNNWNKPIKNSVTTKQWMSALPDTTNLAALSIPGTHDTMSYNGDITWTLTKPLAQTQTMSLYQQLEAGIRYIDIRAKDNLNIYHGPIFLNASLSGVLETITQFLKKNPKETIIMRLKDEQNSNDSFDYRIQPLINIYKDYFYTTPRTDTSNKIPTLKDVRGKILLLSENHTKKPLVINSRKFGMQFGAPNQVIQDDYNGPSVKTKFKEIVQTAYQASKADNKLFLNHISATSLTFTPRQYAAALNNKVEQFVLNLTSEKVRGLGILIMDFPEKQTIKNIIKNNKFN.

The N-terminal stretch at 1-22 (MYKNYLQRTLVLLLCFILYFFT) is a signal peptide. Residues 58-196 (LAALSIPGTH…LKDVRGKILL (139 aa)) form the PI-PLC X-box domain. His67 serves as the catalytic Proton acceptor. The active-site Proton donor is the His115.

As to quaternary structure, monomer.

The protein localises to the secreted. It is found in the cytoplasm. The catalysed reaction is a 1,2-diacyl-sn-glycero-3-phospho-(1D-myo-inositol) = 1D-myo-inositol 1,2-cyclic phosphate + a 1,2-diacyl-sn-glycerol. Functionally, cleaves glycosylphosphatidylinositol (GPI) and phosphatidylinositol (PI) anchors but not PI phosphates. Important factor in pathogenesis, PI-PLC activity is present only in virulent listeria species. It may participate in the lysis of the phagolysosomal membrane. The chain is 1-phosphatidylinositol phosphodiesterase (plcA) from Listeria monocytogenes serovar 1/2a (strain ATCC BAA-679 / EGD-e).